The chain runs to 215 residues: Eukaryotic translation initiation factor 4E-1A (215 aa).

Positions 1–14 (MATAEPETSTNPSN) are enriched in low complexity. Positions 1–23 (MATAEPETSTNPSNSEEKNEENE) are disordered. MRNA is bound by residues 54-55 (WQ), 100-101 (WE), 155-160 (RTKGDK), and 203-205 (TKS).

This sequence belongs to the eukaryotic initiation factor 4E family. As to quaternary structure, interacts with eif4ebp3l. In terms of tissue distribution, expressed in all tissues examined, including gill, fin, heart, intestine, muscle, ovary and testis.

It is found in the cytoplasm. It localises to the nucleus. Functionally, recognizes and binds the 7-methylguanosine (m7G)-containing mRNA cap during an early step in the initiation of protein synthesis and facilitates ribosome binding by inducing the unwinding of the mRNAs secondary structures. Also promotes export of a subset of mRNAs from the nucleus to the cytoplasm. In Danio rerio (Zebrafish), this protein is Eukaryotic translation initiation factor 4E-1A.